The chain runs to 124 residues: Phycocyanin PC645 alpha-3 subunit (124 aa).

R71 is a (2R,3E)-phycocyanobilin binding site. C73, Y81, and K97 together coordinate mesobiliverdin.

It belongs to the phycoerythrin family. In terms of assembly, heterotetramer of 2 different alpha chains and 2 identical beta chains which form 2 alpha-beta heterodimers within the heterotetramer. In terms of processing, contains one phycocyanobilin chromophore and one mesobiliverdin chromophore with binding mediated by both the alpha and beta subunits.

The protein localises to the plastid. It localises to the chloroplast thylakoid membrane. Light-harvesting photosynthetic tetrapyrrole chromophore-protein from the phycobiliprotein complex. This chain is Phycocyanin PC645 alpha-3 subunit, found in Chroomonas sp. (strain CCMP270).